A 413-amino-acid chain; its full sequence is MAVNFPSIDPAQLHPVAGVTLGWAEANIRKPNRKDVLVVSVEEGATVSGVFTENRFCAAPVTVCREHLAKVRAGGAGIRALVVNTGNANAGTGEPGLAHARETCAELARLAGIAPGQVLPFSTGVILEPLPIERLKAGLPAALANRAAANWHDAAQAIMTTDTLPKAASRQVMIDGHTITLTGISKGAGMIKPNMATMLGFLAFDAKVAQPVLDALVKDVADRSFNCITIDGDTSTNDSFILIASGKASLPQIASTDSPAYAALREAVTSVAQALAQLIVRDGEGATKFITVTVEGGKSAAECRQIAYAIGHSPLVKTAFYASDPNLGRILAAIGYAGVADLDVGKIDLYLDDVLVAKAGGRNPAYLEEDGQRVMKQSEIAVRVLLGRGDAQATIWTCDLSHDYVSINADYRS.

Residues Thr160, Lys186, Thr197, Glu284, Asn408, and Ser413 each coordinate substrate. Thr197 acts as the Nucleophile in catalysis.

It belongs to the ArgJ family. As to quaternary structure, heterotetramer of two alpha and two beta chains.

The protein localises to the cytoplasm. It catalyses the reaction N(2)-acetyl-L-ornithine + L-glutamate = N-acetyl-L-glutamate + L-ornithine. The enzyme catalyses L-glutamate + acetyl-CoA = N-acetyl-L-glutamate + CoA + H(+). Its pathway is amino-acid biosynthesis; L-arginine biosynthesis; L-ornithine and N-acetyl-L-glutamate from L-glutamate and N(2)-acetyl-L-ornithine (cyclic): step 1/1. It participates in amino-acid biosynthesis; L-arginine biosynthesis; N(2)-acetyl-L-ornithine from L-glutamate: step 1/4. In terms of biological role, catalyzes two activities which are involved in the cyclic version of arginine biosynthesis: the synthesis of N-acetylglutamate from glutamate and acetyl-CoA as the acetyl donor, and of ornithine by transacetylation between N(2)-acetylornithine and glutamate. The protein is Arginine biosynthesis bifunctional protein ArgJ of Burkholderia mallei (strain ATCC 23344).